A 226-amino-acid polypeptide reads, in one-letter code: Large ribosomal subunit protein uL1 (226 aa).

Belongs to the universal ribosomal protein uL1 family. As to quaternary structure, part of the 50S ribosomal subunit.

In terms of biological role, binds directly to 23S rRNA. The L1 stalk is quite mobile in the ribosome, and is involved in E site tRNA release. Functionally, protein L1 is also a translational repressor protein, it controls the translation of the L11 operon by binding to its mRNA. The protein is Large ribosomal subunit protein uL1 of Borreliella afzelii (strain PKo) (Borrelia afzelii).